The primary structure comprises 225 residues: uncharacterized protein (225 aa).

This is an uncharacterized protein from Mycoplasma pneumoniae (strain ATCC 29342 / M129 / Subtype 1) (Mycoplasmoides pneumoniae).